The primary structure comprises 322 residues: Ferrochelatase (322 aa).

His194 and Glu275 together coordinate Fe cation.

It belongs to the ferrochelatase family.

It localises to the cytoplasm. The catalysed reaction is heme b + 2 H(+) = protoporphyrin IX + Fe(2+). Its pathway is porphyrin-containing compound metabolism; protoheme biosynthesis; protoheme from protoporphyrin-IX: step 1/1. Its function is as follows. Catalyzes the ferrous insertion into protoporphyrin IX. This is Ferrochelatase from Proteus mirabilis (strain HI4320).